The sequence spans 294 residues: 4-hydroxy-tetrahydrodipicolinate synthase (294 aa).

Threonine 47 contacts pyruvate. Tyrosine 136 serves as the catalytic Proton donor/acceptor. Lysine 164 acts as the Schiff-base intermediate with substrate in catalysis. Residue valine 206 participates in pyruvate binding.

This sequence belongs to the DapA family. As to quaternary structure, homotetramer; dimer of dimers.

The protein localises to the cytoplasm. It catalyses the reaction L-aspartate 4-semialdehyde + pyruvate = (2S,4S)-4-hydroxy-2,3,4,5-tetrahydrodipicolinate + H2O + H(+). The protein operates within amino-acid biosynthesis; L-lysine biosynthesis via DAP pathway; (S)-tetrahydrodipicolinate from L-aspartate: step 3/4. In terms of biological role, catalyzes the condensation of (S)-aspartate-beta-semialdehyde [(S)-ASA] and pyruvate to 4-hydroxy-tetrahydrodipicolinate (HTPA). The polypeptide is 4-hydroxy-tetrahydrodipicolinate synthase (Acaryochloris marina (strain MBIC 11017)).